The primary structure comprises 290 residues: Enoyl-CoA hydratase, mitochondrial (290 aa).

The transit peptide at 1-27 (MATLRVLLSCVRGPLRPPVRCPAWRPF) directs the protein to the mitochondrion. A Phosphothreonine modification is found at threonine 46. 98–101 (ADIK) provides a ligand contact to substrate. At lysine 101 the chain carries N6-acetyllysine; alternate. Lysine 101 is modified (N6-succinyllysine; alternate). At serine 114 the chain carries Phosphoserine. Residue lysine 115 is modified to N6-acetyllysine; alternate. Lysine 115 carries the N6-succinyllysine; alternate modification. Lysine 118 bears the N6-acetyllysine mark. Position 141 (glycine 141) interacts with substrate. Lysine 204 carries the N6-succinyllysine modification. Residue lysine 211 is modified to N6-acetyllysine.

Belongs to the enoyl-CoA hydratase/isomerase family. Homohexamer; dimer of trimers.

The protein resides in the mitochondrion matrix. It catalyses the reaction a (3S)-3-hydroxyacyl-CoA = a (2E)-enoyl-CoA + H2O. The enzyme catalyses a (3E)-enoyl-CoA = a 4-saturated (2E)-enoyl-CoA. It carries out the reaction (3E)-hexenoyl-CoA = (2E)-hexenoyl-CoA. The catalysed reaction is (3S)-3-hydroxybutanoyl-CoA = (2E)-butenoyl-CoA + H2O. It catalyses the reaction 3-hydroxyisovaleryl-CoA = 3-methylbut-2-enoyl-CoA + H2O. The enzyme catalyses 3-hydroxypropanoyl-CoA = acryloyl-CoA + H2O. It carries out the reaction 3-hydroxybutanoyl-CoA = (2E)-butenoyl-CoA + H2O. The catalysed reaction is 2-methylpropenoyl-CoA + H2O = (S)-3-hydroxyisobutanoyl-CoA. It catalyses the reaction (3S)-hydroxyhexanoyl-CoA = (2E)-hexenoyl-CoA + H2O. The enzyme catalyses (3S)-hydroxydecanoyl-CoA = (2E)-decenoyl-CoA + H2O. It functions in the pathway lipid metabolism; fatty acid beta-oxidation. Its function is as follows. Converts unsaturated trans-2-enoyl-CoA species ((2E)-enoyl-CoA) to the corresponding (3S)-3-hydroxyacyl-CoA species through addition of a water molecule to the double bond. Catalyzes the hydration of medium- and short-chained fatty enoyl-CoA thioesters from 4 carbons long (C4) up to C16. Has high substrate specificity for crotonyl-CoA ((2E)-butenoyl-CoA) and moderate specificity for acryloyl-CoA, 3-methylcrotonyl-CoA (3-methyl-(2E)-butenoyl-CoA) and methacrylyl-CoA ((2E)-2-methylpropenoyl-CoA). Can bind tiglyl-CoA (2-methylcrotonoyl-CoA), but hydrates only a small amount of this substrate. Plays a key role in the beta-oxidation spiral of short- and medium-chain fatty acid oxidation. At a lower rate than the hydratase reaction, catalyzes the isomerase reaction of trans-3-enoyl-CoA species (such as (3E)-hexenoyl-CoA) to trans-2-enoyl-CoA species (such as (2E)-hexenoyl-CoA), which are subsequently hydrated to 3(S)-3-hydroxyacyl-CoA species (such as (3S)-hydroxyhexanoyl-CoA). This is Enoyl-CoA hydratase, mitochondrial (ECHS1) from Pongo abelii (Sumatran orangutan).